Consider the following 379-residue polypeptide: Cytochrome b (379 aa).

Helical transmembrane passes span 33-53 (FGSL…FLAM), 77-98 (WLIR…YIHI), 113-133 (WNIG…GYVL), and 178-198 (FFAF…VHLL). Positions 83 and 97 each coordinate heme b. Heme b-binding residues include His182 and His196. His201 lines the a ubiquinone pocket. 4 helical membrane passes run 226-246 (TKDF…VLYF), 288-308 (LGGV…PYIH), 320-340 (ISQF…WIGG), and 347-367 (FIII…IXMX).

Belongs to the cytochrome b family. The cytochrome bc1 complex contains 11 subunits: 3 respiratory subunits (MT-CYB, CYC1 and UQCRFS1), 2 core proteins (UQCRC1 and UQCRC2) and 6 low-molecular weight proteins (UQCRH/QCR6, UQCRB/QCR7, UQCRQ/QCR8, UQCR10/QCR9, UQCR11/QCR10 and a cleavage product of UQCRFS1). This cytochrome bc1 complex then forms a dimer. Heme b is required as a cofactor.

The protein localises to the mitochondrion inner membrane. Functionally, component of the ubiquinol-cytochrome c reductase complex (complex III or cytochrome b-c1 complex) that is part of the mitochondrial respiratory chain. The b-c1 complex mediates electron transfer from ubiquinol to cytochrome c. Contributes to the generation of a proton gradient across the mitochondrial membrane that is then used for ATP synthesis. The polypeptide is Cytochrome b (MT-CYB) (Thomomys umbrinus (Southern pocket gopher)).